Here is a 379-residue protein sequence, read N- to C-terminus: Cytochrome b (379 aa).

Helical transmembrane passes span 33–53, 77–98, 113–133, and 178–198; these read FGSLLGLCLITQIVTGLFLAM, WFLRNIHANGASLFFICLYLHI, WNVGVVLFLLVMMTAFVGYVL, and FFTFHFLFPFVIAGASMIHLL. Residues His-83 and His-97 each contribute to the heme b site. Heme b-binding residues include His-182 and His-196. His-201 lines the a ubiquinone pocket. The next 4 membrane-spanning stretches (helical) occupy residues 226-246, 288-308, 320-340, and 347-367; these read YKDLLGFIILLAGLMFLTLFS, LGGVLALLFSILILMIVPITH, LTQILFWTLVADMFILTWIGG, and FIIIGQIASIIYFALFLVFAP.

Belongs to the cytochrome b family. In terms of assembly, the cytochrome bc1 complex contains 3 respiratory subunits (MT-CYB, CYC1 and UQCRFS1), 2 core proteins (UQCRC1 and UQCRC2) and probably 6 low-molecular weight proteins. Heme b is required as a cofactor.

It is found in the mitochondrion inner membrane. Its function is as follows. Component of the ubiquinol-cytochrome c reductase complex (complex III or cytochrome b-c1 complex) that is part of the mitochondrial respiratory chain. The b-c1 complex mediates electron transfer from ubiquinol to cytochrome c. Contributes to the generation of a proton gradient across the mitochondrial membrane that is then used for ATP synthesis. The polypeptide is Cytochrome b (mt-cyb) (Amia calva (Bowfin)).